A 187-amino-acid polypeptide reads, in one-letter code: Capsid protein (187 aa).

Basic residues predominate over residues 151-180 (RRGSARVVRSPRRRTPSPRRRRSQSPRRRP). A disordered region spans residues 151–187 (RRGSARVVRSPRRRTPSPRRRRSQSPRRRPQSPASNC). S160, S167, and S175 each carry phosphoserine; by host. Repeat copies occupy residues 160-164 (SPRRR), 167-171 (SPRRR), and 175-179 (SPRRR). The segment at 160–179 (SPRRRTPSPRRRRSQSPRRR) is 3 X 5 AA repeats of S-P-R-R-R. The Bipartite nuclear localization signal motif lies at 163 to 180 (RRTPSPRRRRSQSPRRRP). The segment at 181–187 (QSPASNC) is RNA binding.

The protein belongs to the orthohepadnavirus core antigen family. Homodimerizes, then multimerizes. Interacts with cytosol exposed regions of viral L glycoprotein present in the reticulum-to-Golgi compartment. Interacts with human FLNB. Phosphorylated form interacts with host importin alpha; this interaction depends on the exposure of the NLS, which itself depends upon genome maturation and/or phosphorylation of the capsid protein. Interacts with host NUP153. In terms of processing, phosphorylated by host SRPK1, SRPK2, and maybe protein kinase C or GAPDH. Phosphorylation is critical for pregenomic RNA packaging. Protein kinase C phosphorylation is stimulated by HBx protein and may play a role in transport of the viral genome to the nucleus at the late step during the viral replication cycle.

The protein resides in the virion. It is found in the host cytoplasm. Self assembles to form an icosahedral capsid. Most capsids appear to be large particles with an icosahedral symmetry of T=4 and consist of 240 copies of capsid protein, though a fraction forms smaller T=3 particles consisting of 180 capsid proteins. Entering capsids are transported along microtubules to the nucleus. Phosphorylation of the capsid is thought to induce exposure of nuclear localization signal in the C-terminal portion of the capsid protein that allows binding to the nuclear pore complex via the importin (karyopherin-) alpha and beta. Capsids are imported in intact form through the nuclear pore into the nuclear basket, where it probably binds NUP153. Only capsids that contain the mature viral genome can release the viral DNA and capsid protein into the nucleoplasm. Immature capsids get stuck in the basket. Capsids encapsulate the pre-genomic RNA and the P protein. Pre-genomic RNA is reverse-transcribed into DNA while the capsid is still in the cytoplasm. The capsid can then either be directed to the nucleus, providing more genomes for transcription, or bud through the endoplasmic reticulum to provide new virions. This is Capsid protein from Urocitellus parryii kennicottii (ASHV).